Here is an 838-residue protein sequence, read N- to C-terminus: Translation initiation factor IF-2 (838 aa).

2 disordered regions span residues 30–60 (PHTAAEEHVSDSEKQSLLTHLKSSHKAKVEE) and 94–254 (QRSP…PTGP). 2 stretches are compositionally biased toward basic and acidic residues: residues 33–43 (AAEEHVSDSEK) and 96–136 (SPEE…EARR). Over residues 137 to 173 (QPAPVAEPVAAQAAAPAPAPVVEPVQEAPVATAAPAA) the composition is skewed to low complexity. Composition is skewed to basic and acidic residues over residues 174–214 (DARK…EKAP) and 222–231 (TTDEESDGFR). Residues 232–245 (RGGRGKAKLKKRNA) are compositionally biased toward basic residues. Residues 338–507 (ARAPVVTVMG…LLQAEVLELK (170 aa)) form the tr-type G domain. The segment at 347 to 354 (GHVDHGKT) is G1. 347–354 (GHVDHGKT) provides a ligand contact to GTP. The interval 372 to 376 (GITQH) is G2. Residues 393 to 396 (DTPG) are G3. Residues 393-397 (DTPGH) and 447-450 (NKID) each bind GTP. The G4 stretch occupies residues 447-450 (NKID). The tract at residues 483–485 (SAK) is G5.

This sequence belongs to the TRAFAC class translation factor GTPase superfamily. Classic translation factor GTPase family. IF-2 subfamily.

It is found in the cytoplasm. One of the essential components for the initiation of protein synthesis. Protects formylmethionyl-tRNA from spontaneous hydrolysis and promotes its binding to the 30S ribosomal subunits. Also involved in the hydrolysis of GTP during the formation of the 70S ribosomal complex. The chain is Translation initiation factor IF-2 from Pseudomonas fluorescens (strain ATCC BAA-477 / NRRL B-23932 / Pf-5).